The chain runs to 408 residues: Argininosuccinate synthase (408 aa).

Residue 8–16 (AYSGGLDTT) participates in ATP binding. L-citrulline is bound at residue tyrosine 86. Glycine 116 contributes to the ATP binding site. 3 residues coordinate L-aspartate: threonine 118, asparagine 122, and aspartate 123. Asparagine 122 lines the L-citrulline pocket. Positions 126, 177, 186, 263, and 275 each coordinate L-citrulline.

It belongs to the argininosuccinate synthase family. Type 1 subfamily. In terms of assembly, homotetramer.

It is found in the cytoplasm. The catalysed reaction is L-citrulline + L-aspartate + ATP = 2-(N(omega)-L-arginino)succinate + AMP + diphosphate + H(+). It functions in the pathway amino-acid biosynthesis; L-arginine biosynthesis; L-arginine from L-ornithine and carbamoyl phosphate: step 2/3. In Agathobacter rectalis (strain ATCC 33656 / DSM 3377 / JCM 17463 / KCTC 5835 / VPI 0990) (Eubacterium rectale), this protein is Argininosuccinate synthase.